The primary structure comprises 484 residues: Monocarboxylate transporter 2 (484 aa).

Topologically, residues 1 to 16 (MPSEPSAPLPQPLPPD) are cytoplasmic. The chain crosses the membrane as a helical span at residues 17-37 (GGWGWVVVCASFISIGFSYAF). Over 38–60 (PKAVTVFFKDIQEIFNTTSSQIA) the chain is Extracellular. The chain crosses the membrane as a helical span at residues 61-81 (WISSIMLAVMYAGGPISSVLV). Residues 82–90 (NNYGSRPVV) lie on the Cytoplasmic side of the membrane. A helical membrane pass occupies residues 91–111 (IVGGLLCCIGMILASYSNSVI). The Extracellular portion of the chain corresponds to 112–116 (ELYLT). The helical transmembrane segment at 117–137 (VGFIGGLGLAFNLQPALTIIG) threads the bilayer. The Cytoplasmic segment spans residues 138-149 (KYFYRRRPLANG). The chain crosses the membrane as a helical span at residues 150 to 170 (CAMAGSPVFLSTLAPFNQYLF). Residues 171–174 (NNYG) lie on the Extracellular side of the membrane. The helical transmembrane segment at 175–195 (WKGSFLILGGIFLHSCVAGCL) threads the bilayer. Topologically, residues 196–245 (MRPVGPSPNTKKSKSKVGSRHDSTLKKASKVSTAQKVNRFLDFSLFMHRG) are cytoplasmic. The helical transmembrane segment at 246–266 (FLIYLSGNVILFLGIFAPIIF) threads the bilayer. At 267 to 281 (LAQYAKHIGVDDYNS) the chain is on the extracellular side. The helical transmembrane segment at 282–302 (AFLLSVMAFIDMFARPSVGLI) threads the bilayer. Topologically, residues 303-311 (ANTSLIRPR) are cytoplasmic. Residues 312–332 (IQYLFSSAIIFTGICHLLCPL) traverse the membrane as a helical segment. Over 333–337 (ATTYS) the chain is Extracellular. The helical transmembrane segment at 338–358 (ALVVYVVFFGLGFGSISSLLF) threads the bilayer. Residues 359-372 (ECLMDIVGATRFSS) lie on the Cytoplasmic side of the membrane. Residues 373 to 393 (AVGLTTIVECCPVLFGPPLAG) form a helical membrane-spanning segment. At 394–405 (KLLDITGEYKYL) the chain is on the extracellular side. The chain crosses the membrane as a helical span at residues 406–426 (YIASGTVVLVSGTYLLIGNAI). Residues 427–484 (NYRLLDKERKREKAKKKKSASHASREMEALNRSKQDEVTVKASNAHNPPSDRDKESNI) are Cytoplasmic-facing. The tract at residues 438 to 484 (EKAKKKKSASHASREMEALNRSKQDEVTVKASNAHNPPSDRDKESNI) is disordered. Basic and acidic residues-rich tracts occupy residues 449-465 (ASRE…DEVT) and 475-484 (PSDRDKESNI).

This sequence belongs to the major facilitator superfamily. Monocarboxylate porter (TC 2.A.1.13) family. In terms of assembly, homodimer. Interacts with GRID2IP. Interacts with EMB; interaction mediates SLC16A7 targeting to the plasma membrane. Interacts with isoform 2 of BSG. Detected in testis and in spermatozoa (at protein level).

Its subcellular location is the cell membrane. It localises to the cytoplasm. The protein localises to the basolateral cell membrane. It carries out the reaction (S)-lactate(in) + H(+)(in) = (S)-lactate(out) + H(+)(out). The enzyme catalyses 3-methyl-2-oxobutanoate(out) + H(+)(out) = 3-methyl-2-oxobutanoate(in) + H(+)(in). It catalyses the reaction acetoacetate(out) + H(+)(out) = acetoacetate(in) + H(+)(in). The catalysed reaction is (R)-3-hydroxybutanoate(out) + H(+)(out) = (R)-3-hydroxybutanoate(in) + H(+)(in). It carries out the reaction 4-methyl-2-oxopentanoate(out) + H(+)(out) = 4-methyl-2-oxopentanoate(in) + H(+)(in). The enzyme catalyses pyruvate(out) + H(+)(out) = pyruvate(in) + H(+)(in). It catalyses the reaction (S)-3-hydroxybutanoate(out) + H(+)(out) = (S)-3-hydroxybutanoate(in) + H(+)(in). With respect to regulation, transport activity exhibits steep dependence on substrate concentration. Substrate concentration sensitivity of SLC16A7 arises from the strong inter-subunit cooperativity of the SLC16A7 dimer during transport. Inhibited by AR-C155858. Functionally, proton-coupled monocarboxylate symporter. Catalyzes the rapid transport across the plasma membrane of monocarboxylates such as L-lactate, pyruvate and ketone bodies, acetoacetate, beta-hydroxybutyrate and acetate. Dimerization is functionally required and both subunits work cooperatively in transporting substrate. The polypeptide is Monocarboxylate transporter 2 (Slc16a7) (Mus musculus (Mouse)).